The following is a 494-amino-acid chain: Cysteine--tRNA ligase (494 aa).

Cys29 is a binding site for Zn(2+). Positions 31–41 match the 'HIGH' region motif; sequence VTVYDHCHIGH. Residues Cys209, His234, and Glu238 each coordinate Zn(2+). Residues 266–270 carry the 'KMSKS' region motif; the sequence is KMSKS. Lys269 is an ATP binding site.

It belongs to the class-I aminoacyl-tRNA synthetase family. In terms of assembly, monomer. It depends on Zn(2+) as a cofactor.

Its subcellular location is the cytoplasm. It carries out the reaction tRNA(Cys) + L-cysteine + ATP = L-cysteinyl-tRNA(Cys) + AMP + diphosphate. This Geotalea daltonii (strain DSM 22248 / JCM 15807 / FRC-32) (Geobacter daltonii) protein is Cysteine--tRNA ligase.